The following is a 518-amino-acid chain: Probable G-protein coupled receptor Mth-like 2 (518 aa).

The N-terminal stretch at 1 to 26 (MIASSKMLLSASILIYFLLNLQSSSA) is a signal peptide. Residues 27-220 (EIADCSFYDT…CLILPSRTGQ (194 aa)) lie on the Extracellular side of the membrane. Disulfide bonds link C31–C85, C87–C92, C96–C190, C97–C108, and C152–C211. N-linked (GlcNAc...) asparagine glycosylation occurs at N47. N-linked (GlcNAc...) asparagine glycosylation is found at N111, N125, and N201. The chain crosses the membrane as a helical span at residues 221 to 241 (TVVMITSLICLVLTIAVYLCV). Residues 242 to 250 (KKLMNLEGK) are Cytoplasmic-facing. Residues 251–271 (CFICYMMCLFFGYLFLLLDLW) traverse the membrane as a helical segment. Over 272–279 (ELSLDFCK) the chain is Extracellular. A helical transmembrane segment spans residues 280–300 (AAGFLGYFFVMAAFFWLSIIS). At 301–321 (RHYWKCLTNPCASMNIRSERA) the chain is on the cytoplasmic side. Residues 322-342 (FLLYSCFAWAMPLALTGVTYL) traverse the membrane as a helical segment. Over 343-371 (ADNVVNNEEWQPRVGDEGHCWIYTKSWSA) the chain is Extracellular. The helical transmembrane segment at 372-392 (MVYFYGPMVLLILFNITMFVL) threads the bilayer. Residues 393–426 (TAKHIIDSKRTLRKIARNEGRIQKLNSDKQNYTQ) lie on the Cytoplasmic side of the membrane. A helical membrane pass occupies residues 427–447 (FLLLFTVMGMSWSFEIFSYLV). Over 448 to 455 (QREKLWVN) the chain is Extracellular. The helical transmembrane segment at 456-476 (IFLVADYFNWSQGVIIFVLFI) threads the bilayer. Over 477–518 (LRRKTLVLFKKQIFPKQRAFSRSATQSTIESISQTKRHFNMT) the chain is Cytoplasmic.

The protein belongs to the G-protein coupled receptor 2 family. Mth subfamily.

Its subcellular location is the cell membrane. The protein is Probable G-protein coupled receptor Mth-like 2 (mthl2) of Drosophila melanogaster (Fruit fly).